The following is an 859-amino-acid chain: Mismatch repair endonuclease PMS2 (859 aa).

The ATP site is built by Asn-45, Asp-70, Glu-109, Ala-110, and Leu-111. Disordered stretches follow at residues 391 to 413, 427 to 455, and 469 to 555; these read ELEK…ADEK, LHPT…RGVL, and RGSQ…KPED. Basic and acidic residues-rich tracts occupy residues 427–439 and 485–495; these read LHPT…RGPE and CMDREKIEKDS. The span at 512–525 shows a compositional bias: polar residues; that stretch reads EVASSFSSDYNVSS. The short motif at 574–577 is the Nuclear localization signal element; it reads KRFK. Positions 578-597 are disordered; sequence TEERPSNVNISQRLPGPQST. A compositionally biased stretch (polar residues) spans 583-597; the sequence is SNVNISQRLPGPQST.

It belongs to the DNA mismatch repair MutL/HexB family. Heterodimer of PMS2 and MLH1 (MutL alpha); this interaction is required for the stability of both partners. Forms a ternary complex with MutS alpha (MSH2-MSH6) or MutS beta (MSH2-MSH3). Part of the BRCA1-associated genome surveillance complex (BASC), which contains BRCA1, MSH2, MSH6, MLH1, ATM, BLM, PMS2 and the RAD50-MRE11-NBS1 protein complex. This association could be a dynamic process changing throughout the cell cycle and within subnuclear domains. Interacts with MTMR15/FAN1.

The protein resides in the nucleus. The catalysed reaction is ATP + H2O = ADP + phosphate + H(+). Its function is as follows. Component of the post-replicative DNA mismatch repair system (MMR). Heterodimerizes with MLH1 to form MutL alpha. DNA repair is initiated by MutS alpha (MSH2-MSH6) or MutS beta (MSH2-MSH3) binding to a dsDNA mismatch, then MutL alpha is recruited to the heteroduplex. Assembly of the MutL-MutS-heteroduplex ternary complex in presence of RFC and PCNA is sufficient to activate endonuclease activity of PMS2. It introduces single-strand breaks near the mismatch and thus generates new entry points for the exonuclease EXO1 to degrade the strand containing the mismatch. DNA methylation would prevent cleavage and therefore assure that only the newly mutated DNA strand is going to be corrected. MutL alpha (MLH1-PMS2) interacts physically with the clamp loader subunits of DNA polymerase III, suggesting that it may play a role to recruit the DNA polymerase III to the site of the MMR. Also implicated in DNA damage signaling, a process which induces cell cycle arrest and can lead to apoptosis in case of major DNA damages. Possesses an ATPase activity, but in the absence of gross structural changes, ATP hydrolysis may not be necessary for proficient mismatch repair. This Mus musculus (Mouse) protein is Mismatch repair endonuclease PMS2.